The following is a 424-amino-acid chain: tRNA (guanine-N(7)-)-methyltransferase non-catalytic subunit wuho (424 aa).

A disordered region spans residues 42 to 92; that stretch reads LKGHTSQSQESCTAAAAASTATAASGQAPGGKEQQLANQPEEGGTSASASG. Positions 46–68 are enriched in low complexity; that stretch reads TSQSQESCTAAAAASTATAASGQ. WD repeat units lie at residues 96-137, 184-223, 227-265, and 324-364; these read ATST…ARLL, GHLS…DIHS, GHRE…ELLQ, and AGSW…PASS.

The protein belongs to the WD repeat TRM82 family. In terms of assembly, forms a heterodimer with the catalytic subunit Mettl1. Interacts with mei-P26 and weakly interacts with bgcn; required for the function or formation of the mei-P26-bgcn-bam-sxl complex. Interacts with nanos; may be involved in mei-P26-dependent derepression of the BMP signaling pathway. Interacts with Myc; the interaction may be mediated by mei-P26 and may be involved in the regulation of ribosome biogenesis. As to expression, in testis, it is present at high level in hub cells, a niche for germline stem cells of testis. Ubiquitously expressed in all testicular cells throughout spermatogenesis. Ubiquitously expressed in all germline and somatic cells of the ovary.

It is found in the nucleus. Its subcellular location is the cytoplasm. It functions in the pathway tRNA modification; N(7)-methylguanine-tRNA biosynthesis. Its function is as follows. Required for the Mettl1-dependent formation of N(7)-methylguanine at position 46 (m7G46) in tRNA. In the Mettl1-wuho methyltransferase complex, it is required to stabilize and induce conformational changes of the catalytic subunit. Required for binding of nanos mRNA and repression of translation by the mei-P26-bgcn-bam-sxl complex. May cooperate with mei-P26 and nanos to derepress the BMP signaling pathway. May cooperate with mei-P26 to suppress expression of a subset of microRNAs. May cooperate with mei-P26 to regulate bam expression levels in germline cells during gametogenesis. Required to promote mitosis to meiosis transition during gametogenesis. May regulate germline cell division in part by regulating ribosome biogenesis. In Drosophila melanogaster (Fruit fly), this protein is tRNA (guanine-N(7)-)-methyltransferase non-catalytic subunit wuho.